A 227-amino-acid polypeptide reads, in one-letter code: Cytochrome c oxidase subunit 2 (227 aa).

The Mitochondrial intermembrane segment spans residues 1 to 14 (MAHPVQLGLQDATS). A helical transmembrane segment spans residues 15 to 45 (PVMEELITFHDHALMAMSLISLLVLYALFST). The Mitochondrial matrix portion of the chain corresponds to 46 to 59 (LTTKLTNTNITDAQ). A helical membrane pass occupies residues 60–87 (EMEIIWTILPAIILVLIALPSLRILYLT). The Mitochondrial intermembrane portion of the chain corresponds to 88 to 227 (DEVNNPSFTI…IFEMGPVFTL (140 aa)). Cu cation-binding residues include His161, Cys196, Glu198, Cys200, His204, and Met207. Residue Glu198 participates in Mg(2+) binding.

This sequence belongs to the cytochrome c oxidase subunit 2 family. As to quaternary structure, component of the cytochrome c oxidase (complex IV, CIV), a multisubunit enzyme composed of 14 subunits. The complex is composed of a catalytic core of 3 subunits MT-CO1, MT-CO2 and MT-CO3, encoded in the mitochondrial DNA, and 11 supernumerary subunits COX4I, COX5A, COX5B, COX6A, COX6B, COX6C, COX7A, COX7B, COX7C, COX8 and NDUFA4, which are encoded in the nuclear genome. The complex exists as a monomer or a dimer and forms supercomplexes (SCs) in the inner mitochondrial membrane with NADH-ubiquinone oxidoreductase (complex I, CI) and ubiquinol-cytochrome c oxidoreductase (cytochrome b-c1 complex, complex III, CIII), resulting in different assemblies (supercomplex SCI(1)III(2)IV(1) and megacomplex MCI(2)III(2)IV(2)). Found in a complex with TMEM177, COA6, COX18, COX20, SCO1 and SCO2. Interacts with TMEM177 in a COX20-dependent manner. Interacts with COX20. Interacts with COX16. Requires Cu cation as cofactor.

Its subcellular location is the mitochondrion inner membrane. The catalysed reaction is 4 Fe(II)-[cytochrome c] + O2 + 8 H(+)(in) = 4 Fe(III)-[cytochrome c] + 2 H2O + 4 H(+)(out). In terms of biological role, component of the cytochrome c oxidase, the last enzyme in the mitochondrial electron transport chain which drives oxidative phosphorylation. The respiratory chain contains 3 multisubunit complexes succinate dehydrogenase (complex II, CII), ubiquinol-cytochrome c oxidoreductase (cytochrome b-c1 complex, complex III, CIII) and cytochrome c oxidase (complex IV, CIV), that cooperate to transfer electrons derived from NADH and succinate to molecular oxygen, creating an electrochemical gradient over the inner membrane that drives transmembrane transport and the ATP synthase. Cytochrome c oxidase is the component of the respiratory chain that catalyzes the reduction of oxygen to water. Electrons originating from reduced cytochrome c in the intermembrane space (IMS) are transferred via the dinuclear copper A center (CU(A)) of subunit 2 and heme A of subunit 1 to the active site in subunit 1, a binuclear center (BNC) formed by heme A3 and copper B (CU(B)). The BNC reduces molecular oxygen to 2 water molecules using 4 electrons from cytochrome c in the IMS and 4 protons from the mitochondrial matrix. In Cercocebus galeritus (Tana river mangabey), this protein is Cytochrome c oxidase subunit 2 (MT-CO2).